We begin with the raw amino-acid sequence, 231 residues long: MKKLSMREMLQAGVHFGHQTRYWNPKMKPFIFGIRNKIHIINLDKTIVMFSNALVELKKIALAKGKILFVGTKRATRESIKSTALICGQFFVNYRWLGGMLTNWKTVRQSIKRLKDLENQSQDGTFDKLTKKEVLILNRELISLENSLGGIKNMGGLPDALFTAGAEQEHIAIKEANSLGIPVFSIVDTNSDPDGIDFIIPGNDDAIRAINLYLNIVSNVICSDELNKETH.

Belongs to the universal ribosomal protein uS2 family.

The chain is Small ribosomal subunit protein uS2 from Blochmanniella floridana.